A 327-amino-acid polypeptide reads, in one-letter code: tRNA N6-adenosine threonylcarbamoyltransferase (327 aa).

Residues His109 and His113 each coordinate Fe cation. Substrate contacts are provided by residues 132–136 (MVSGG), Asp165, Gly178, Asp182, and Asn268. Residue Asp296 participates in Fe cation binding.

It belongs to the KAE1 / TsaD family. As to quaternary structure, forms a hexamer composed of two TsaB, TsaD and TsaE trimers. The cofactor is Fe(2+).

The protein resides in the cytoplasm. The enzyme catalyses L-threonylcarbamoyladenylate + adenosine(37) in tRNA = N(6)-L-threonylcarbamoyladenosine(37) in tRNA + AMP + H(+). Functionally, required for the formation of a threonylcarbamoyl group on adenosine at position 37 (t(6)A37) in tRNAs that read codons beginning with adenine. Is involved in the transfer of the threonylcarbamoyl moiety of threonylcarbamoyl-AMP (TC-AMP) to the N6 group of A37, together with TsaE and TsaB. TsaD likely plays a direct catalytic role in this reaction. In Thermotoga maritima (strain ATCC 43589 / DSM 3109 / JCM 10099 / NBRC 100826 / MSB8), this protein is tRNA N6-adenosine threonylcarbamoyltransferase.